The chain runs to 187 residues: RNA pyrophosphohydrolase (187 aa).

The Nudix hydrolase domain occupies 6 to 149 (GYRANVGIIL…KRQVYRQALT (144 aa)). Residues 38-59 (GGIKSGETPTEAMYRELAEETG) carry the Nudix box motif. A disordered region spans residues 166–187 (AYREPLEPVEKNRKKSSDTRQS).

Belongs to the Nudix hydrolase family. RppH subfamily. A divalent metal cation is required as a cofactor.

In terms of biological role, accelerates the degradation of transcripts by removing pyrophosphate from the 5'-end of triphosphorylated RNA, leading to a more labile monophosphorylated state that can stimulate subsequent ribonuclease cleavage. The polypeptide is RNA pyrophosphohydrolase (Nitrosomonas europaea (strain ATCC 19718 / CIP 103999 / KCTC 2705 / NBRC 14298)).